The chain runs to 425 residues: 5-nitroanthranilic acid aminohydrolase (425 aa).

The active site involves D88. E158 (proton acceptor) is an active-site residue.

It belongs to the peptidase M20A family. Co(2+) is required as a cofactor. Requires Mn(2+) as cofactor. It depends on Zn(2+) as a cofactor. The cofactor is Fe(2+). Ni(2+) serves as cofactor.

It carries out the reaction 5-nitroanthranilate + H2O + H(+) = 5-nitrosalicylate + NH4(+). Functionally, catalyzes the deamination of 5-nitroanthranilate (5NAA) to 5-nitrosalicylate (5NSA), the first step in biodegradation of 5-nitroanthranilate. The chain is 5-nitroanthranilic acid aminohydrolase (naaA) from Bradyrhizobium sp.